A 195-amino-acid polypeptide reads, in one-letter code: Inner membrane protein YohC (195 aa).

Residues 1 to 32 (MSHVWGLFSHPDREMQVINRENETISHHYTHH) lie on the Cytoplasmic side of the membrane. The chain crosses the membrane as a helical span at residues 33–55 (VLLMAAIPVICAFIGTTQIGWNF). Topologically, residues 56 to 64 (GDGTILKLS) are periplasmic. Residues 65-87 (WFTGLALAVLFYGVMLAGVAVMG) traverse the membrane as a helical segment. Topologically, residues 88 to 107 (RVIWWMARNYPQRPSLAHCM) are cytoplasmic. A helical membrane pass occupies residues 108–130 (VFAGYVATPLFLSGLVALYPLVW). Topologically, residues 131-134 (LCAL) are periplasmic. A helical membrane pass occupies residues 135–157 (VGTVALFYTGYLLYLGIPSFLNI). The Cytoplasmic portion of the chain corresponds to 158–169 (NKEEGLSFSSST). The helical transmembrane segment at 170–192 (LAIGVLVLEVLLALTVILWGYGY) threads the bilayer. At 193–195 (RLF) the chain is on the periplasmic side.

It is found in the cell inner membrane. This Escherichia coli O6:H1 (strain CFT073 / ATCC 700928 / UPEC) protein is Inner membrane protein YohC (yohC).